The primary structure comprises 72 residues: Heat shock factor-binding protein 1-like protein 1 (72 aa).

Residues 12 to 66 (DLLQNAAENLLQEVEEHFQALTATLNLRMEEMGNRIEDLQRNVDDLMAQAGIENS) adopt a coiled-coil conformation.

This sequence belongs to the HSBP1 family.

This chain is Heat shock factor-binding protein 1-like protein 1 (Hsbp1l1), found in Rattus norvegicus (Rat).